The following is a 210-amino-acid chain: Probable GTP-binding protein EngB (210 aa).

The region spanning 25–199 (TGIEVAFAGR…RQKLDTWFSE (175 aa)) is the EngB-type G domain. Residues 33–40 (GRSNAGKS), 60–64 (GRTQL), 78–81 (DLPG), 145–148 (TKAD), and 178–180 (FSS) contribute to the GTP site. Mg(2+)-binding residues include serine 40 and threonine 62.

The protein belongs to the TRAFAC class TrmE-Era-EngA-EngB-Septin-like GTPase superfamily. EngB GTPase family. The cofactor is Mg(2+).

Functionally, necessary for normal cell division and for the maintenance of normal septation. This chain is Probable GTP-binding protein EngB, found in Shigella boydii serotype 4 (strain Sb227).